The primary structure comprises 199 residues: Pneumococcal vaccine antigen A homolog (199 aa).

It is found in the cell surface. The chain is Pneumococcal vaccine antigen A homolog (pvaA) from Streptococcus pyogenes serotype M6 (strain ATCC BAA-946 / MGAS10394).